The primary structure comprises 203 residues: Imidazoleglycerol-phosphate dehydratase (203 aa).

The protein belongs to the imidazoleglycerol-phosphate dehydratase family.

It localises to the cytoplasm. The enzyme catalyses D-erythro-1-(imidazol-4-yl)glycerol 3-phosphate = 3-(imidazol-4-yl)-2-oxopropyl phosphate + H2O. The protein operates within amino-acid biosynthesis; L-histidine biosynthesis; L-histidine from 5-phospho-alpha-D-ribose 1-diphosphate: step 6/9. This chain is Imidazoleglycerol-phosphate dehydratase, found in Helicobacter hepaticus (strain ATCC 51449 / 3B1).